A 252-amino-acid polypeptide reads, in one-letter code: 5-oxoprolinase subunit A (252 aa).

The protein belongs to the LamB/PxpA family. In terms of assembly, forms a complex composed of PxpA, PxpB and PxpC.

It carries out the reaction 5-oxo-L-proline + ATP + 2 H2O = L-glutamate + ADP + phosphate + H(+). Catalyzes the cleavage of 5-oxoproline to form L-glutamate coupled to the hydrolysis of ATP to ADP and inorganic phosphate. The sequence is that of 5-oxoprolinase subunit A from Corynebacterium glutamicum (strain R).